A 564-amino-acid polypeptide reads, in one-letter code: MHSYDYLLILAFLVLLLAPAPWLGRFFYRVMEGERTWLSPVLGPVERACYLISGVDPKTEQSWKQYAWALLAFNLAGFVVLFAMLMLQGLLPLNPQQLPGMEWSLAFNTAMSFVTNTNWQAYSGEASLSYLSQMVGLTVQNFVSAATGLAVLVALCRGISRRSSHSLGNFWADMTRATLYALLPISIVLAVFLVWQGVPQNFAHYIDALTLQGADQSLPMGPAASQISIKQLGTNGGGFFGVNSAHPFENPTAWSNLFELVSILLIPAALVFTFGHYVKDMRQSRAILGCMLALLLIGGAVSLWAEYQPNPALNIAGVEQTAPLEGKETRFGTTGTVLWSVATTAASNGSVNGMHDSLNPLAGMVALVNMMVGEVIFGGVGVGLNGMVLNVLIAVFLAGLMIGRTPEYLGKKLQAQEVRLLVATLLVMPVGVLVLGAIAASLPGPAGAISNPGPHGFSQLLYAYTSATANNGSAFGGFSANTVFHNLMLSLAIFIGRFGYILPVLALAGSLAMKKTAPQGQNSFPTHGLLFVTLLTVTILLVGGLTFLPTLALGPIAEHLSLGF.

A run of 10 helical transmembrane segments spans residues 7–27 (LLIL…GRFF), 67–87 (AWAL…MLML), 135–155 (VGLT…LVAL), 179–199 (LYAL…QGVP), 258–278 (FELV…GHYV), 286–306 (AILG…LWAE), 382–402 (VGLN…GLMI), 420–440 (LLVA…AIAA), 487–507 (LMLS…VLAL), and 528–548 (GLLF…LTFL).

The protein belongs to the KdpA family. In terms of assembly, the system is composed of three essential subunits: KdpA, KdpB and KdpC.

The protein resides in the cell inner membrane. Part of the high-affinity ATP-driven potassium transport (or Kdp) system, which catalyzes the hydrolysis of ATP coupled with the electrogenic transport of potassium into the cytoplasm. This subunit binds the periplasmic potassium ions and delivers the ions to the membrane domain of KdpB through an intramembrane tunnel. The chain is Potassium-transporting ATPase potassium-binding subunit from Pseudomonas syringae pv. tomato (strain ATCC BAA-871 / DC3000).